Reading from the N-terminus, the 527-residue chain is uncharacterized protein (527 aa).

4 disordered regions span residues 1-49 (MSSF…IKDE), 99-307 (DFNF…ATTT), 319-353 (TEIN…EDEN), and 382-419 (YINN…QQQE). Over residues 8–17 (YDDESEEEDN) the composition is skewed to acidic residues. Low complexity-rich tracts occupy residues 18–44 (NNNN…NSNN) and 99–115 (DFNF…NSNN). The segment covering 141–150 (NEFRNPDLKN) has biased composition (basic and acidic residues). 2 stretches are compositionally biased toward low complexity: residues 167-178 (SSQNTTTTQQSS) and 186-222 (NNNN…NSNN). The span at 229–248 (DDKSKKINENENTVNKKDNI) shows a compositional bias: basic and acidic residues. The span at 283–296 (LRKKLLKNQPKTKK) shows a compositional bias: basic residues. Low complexity-rich tracts occupy residues 297–307 (STTTTTTATTT) and 319–330 (TEINNNNSNSNN). The segment covering 386-410 (DDGDDDDDDDENENENDSQPEEEYE) has biased composition (acidic residues).

This is an uncharacterized protein from Dictyostelium discoideum (Social amoeba).